The sequence spans 44 residues: uncharacterized protein (44 aa).

The protein localises to the plastid. Its subcellular location is the chloroplast. This is an uncharacterized protein from Trieres chinensis (Marine centric diatom).